Here is an 886-residue protein sequence, read N- to C-terminus: Putative leucine-rich repeat receptor-like serine/threonine-protein kinase At2g14440 (886 aa).

The signal sequence occupies residues 1-23; sequence METRSKLMLLACATFSIISLVKS. At 24 to 528 the chain is on the extracellular side; that stretch reads QNQQGFISLY…KHQPKSWLVA (505 aa). 10 N-linked (GlcNAc...) asparagine glycosylation sites follow: N49, N69, N232, N236, N259, N292, N434, N447, N458, and N471. LRR repeat units lie at residues 413-436, 437-460, 461-483, and 485-507; these read RIIS…QNLT, MLRE…QNLT, MLRE…LATI, and PLLV…LQDR. Residues 529–549 traverse the membrane as a helical segment; sequence IVASISCVAVTIIVLVLIFIF. Residues 550-886 are Cytoplasmic-facing; it reads RRRKSSTRKV…TFISDIPSAR (337 aa). Positions 581 to 850 constitute a Protein kinase domain; that stretch reads NNFEVVLGKG…NMTRVAHELN (270 aa). Residues 587-595 and K608 contribute to the ATP site; that span reads LGKGGFGVV. Position 653 is a phosphotyrosine (Y653). D705 (proton acceptor) is an active-site residue. At S739 the chain carries Phosphoserine. 2 positions are modified to phosphothreonine: T740 and T745. Y753 bears the Phosphotyrosine mark. Positions 863 to 886 are disordered; the sequence is SQDQNSSKSSGHTVTFISDIPSAR. Over residues 865-878 the composition is skewed to polar residues; it reads DQNSSKSSGHTVTF.

The protein belongs to the protein kinase superfamily. Ser/Thr protein kinase family.

It is found in the cell membrane. The enzyme catalyses L-seryl-[protein] + ATP = O-phospho-L-seryl-[protein] + ADP + H(+). It catalyses the reaction L-threonyl-[protein] + ATP = O-phospho-L-threonyl-[protein] + ADP + H(+). The chain is Putative leucine-rich repeat receptor-like serine/threonine-protein kinase At2g14440 from Arabidopsis thaliana (Mouse-ear cress).